The sequence spans 394 residues: 8-amino-7-oxononanoate synthase (394 aa).

Arginine 18 provides a ligand contact to substrate. Glycine 105–tyrosine 106 lines the pyridoxal 5'-phosphate pocket. Substrate is bound at residue histidine 130. Positions 175, 203, and 232 each coordinate pyridoxal 5'-phosphate. Residue lysine 235 is modified to N6-(pyridoxal phosphate)lysine. Residue threonine 349 coordinates substrate.

Belongs to the class-II pyridoxal-phosphate-dependent aminotransferase family. BioF subfamily. As to quaternary structure, homodimer. Pyridoxal 5'-phosphate is required as a cofactor.

The catalysed reaction is 6-carboxyhexanoyl-[ACP] + L-alanine + H(+) = (8S)-8-amino-7-oxononanoate + holo-[ACP] + CO2. It functions in the pathway cofactor biosynthesis; biotin biosynthesis. Functionally, catalyzes the decarboxylative condensation of pimeloyl-[acyl-carrier protein] and L-alanine to produce 8-amino-7-oxononanoate (AON), [acyl-carrier protein], and carbon dioxide. This chain is 8-amino-7-oxononanoate synthase, found in Marinobacter nauticus (strain ATCC 700491 / DSM 11845 / VT8) (Marinobacter aquaeolei).